A 565-amino-acid chain; its full sequence is Proline--tRNA ligase (565 aa).

The protein belongs to the class-II aminoacyl-tRNA synthetase family. ProS type 1 subfamily. As to quaternary structure, homodimer.

Its subcellular location is the cytoplasm. It carries out the reaction tRNA(Pro) + L-proline + ATP = L-prolyl-tRNA(Pro) + AMP + diphosphate. In terms of biological role, catalyzes the attachment of proline to tRNA(Pro) in a two-step reaction: proline is first activated by ATP to form Pro-AMP and then transferred to the acceptor end of tRNA(Pro). As ProRS can inadvertently accommodate and process non-cognate amino acids such as alanine and cysteine, to avoid such errors it has two additional distinct editing activities against alanine. One activity is designated as 'pretransfer' editing and involves the tRNA(Pro)-independent hydrolysis of activated Ala-AMP. The other activity is designated 'posttransfer' editing and involves deacylation of mischarged Ala-tRNA(Pro). The misacylated Cys-tRNA(Pro) is not edited by ProRS. This is Proline--tRNA ligase from Francisella tularensis subsp. novicida (strain U112).